The primary structure comprises 771 residues: Transducin-like enhancer protein 3-B (771 aa).

Positions 1 to 141 (MYPQGRHPAP…PLTQQQLQAQ (141 aa)) are q domain. Positions 137–148 (QLQAQHLSHAAH) are enriched in low complexity. Disordered stretches follow at residues 137–174 (QLQA…GSGS) and 196–360 (HHDL…MEAL). Positions 142-209 (HLSHAAHGPP…EHRERESSTN (68 aa)) are GP domain. Residues 196 to 206 (HHDLEHRERES) are compositionally biased toward basic and acidic residues. The segment covering 207–217 (STNNSVSPSDS) has biased composition (low complexity). Residues 210–278 (NSVSPSDSLR…TPRVSPSHSP (69 aa)) form a ccN domain region. Composition is skewed to basic and acidic residues over residues 219 to 257 (RASE…KSDD) and 282 to 293 (GLDKARALKKDA). The Nuclear localization signal signature appears at 235-238 (KKRR). The tract at residues 279–451 (PENGLDKARA…GGKPAYSFHV (173 aa)) is SP domain. Residues 294–309 (PNSPASVASSGSTPSS) show a composition bias toward low complexity. 2 positions are modified to phosphoserine: Ser-296 and Ser-299. Residues 310-319 (KAKDHPHNDK) show a composition bias toward basic and acidic residues. Polar residues predominate over residues 320 to 332 (SSTPGLKSNTPTP). WD repeat units lie at residues 483 to 521 (SHGE…SKSP), 529 to 568 (NRDN…PRIK), 573 to 612 (SSAP…LVRQ), 615 to 654 (GHTD…QLQQ), 656 to 695 (DFTS…KYQL), 697 to 736 (LHES…SIFQ), and 738 to 771 (KESS…EVIY).

This sequence belongs to the WD repeat Groucho/TLE family. At gastrulation, expression is absent within the axial mesoderm. After gastrulation is complete, expressed in the presomitic mesoderm, but expression in the tailbud doesn't begin until the six to seven somite stage, after which it becomes abundant. Expression is abundant throughout somitogenesis within the posterior half of the somites, but is absent from older somites. Also expressed in a dynamic manner within the neural plate.

The protein resides in the nucleus. In terms of biological role, transcriptional corepressor that binds to a number of transcription factors. Inhibits the transcriptional activation mediated by CTNNB1 and TCF family members in Wnt signaling. The effects of full-length TLE family members may be modulated by association with dominant-negative AES. In Danio rerio (Zebrafish), this protein is Transducin-like enhancer protein 3-B.